The primary structure comprises 387 residues: Exodeoxyribonuclease 7 large subunit (387 aa).

Belongs to the XseA family. As to quaternary structure, heterooligomer composed of large and small subunits.

The protein resides in the cytoplasm. The catalysed reaction is Exonucleolytic cleavage in either 5'- to 3'- or 3'- to 5'-direction to yield nucleoside 5'-phosphates.. Functionally, bidirectionally degrades single-stranded DNA into large acid-insoluble oligonucleotides, which are then degraded further into small acid-soluble oligonucleotides. This Synechococcus sp. (strain CC9605) protein is Exodeoxyribonuclease 7 large subunit.